Consider the following 286-residue polypeptide: Phosphonates import ATP-binding protein PhnC (286 aa).

The ABC transporter domain maps to 3-246 (FHLKQVTRRF…AVTEIYGTDS (244 aa)). 35 to 42 (GRSGAGKS) serves as a coordination point for ATP.

It belongs to the ABC transporter superfamily. Phosphonates importer (TC 3.A.1.9.1) family. In terms of assembly, the complex is composed of two ATP-binding proteins (PhnC), two transmembrane proteins (PhnE) and a solute-binding protein (PhnD).

It localises to the cell inner membrane. The catalysed reaction is phosphonate(out) + ATP + H2O = phosphonate(in) + ADP + phosphate + H(+). Its function is as follows. Part of the ABC transporter complex PhnCDE involved in phosphonates import. Responsible for energy coupling to the transport system. The sequence is that of Phosphonates import ATP-binding protein PhnC from Agrobacterium fabrum (strain C58 / ATCC 33970) (Agrobacterium tumefaciens (strain C58)).